The primary structure comprises 43 residues: Protein PsbN (43 aa).

Residues 4–24 (ATVLSITFAVILIAITGLAVY) form a helical membrane-spanning segment.

It belongs to the PsbN family.

Its subcellular location is the cellular thylakoid membrane. Its function is as follows. May play a role in photosystem I and II biogenesis. The polypeptide is Protein PsbN (Synechocystis sp. (strain ATCC 27184 / PCC 6803 / Kazusa)).